A 291-amino-acid chain; its full sequence is Meteorin (291 aa).

The signal sequence occupies residues 1-21 (MLVATLLCALCCGLLAASAHA). Disulfide bonds link C28-C49, C80-C116, C169-C240, C172-C264, and C182-C286.

It belongs to the meteorin family. Monomer. As to expression, highly expressed in brain. Expressed in undifferentiated neural progenitors and in astrocyte lineage, particularly in Bergmann glia, a subtype of radial glia, and a few discrete neuronal populations residing in the superior colliculus, the ocular motor nucleus, the raphe and pontine nuclei, and in various thalamic nuclei. Weakly expressed in heart, kidney, skeletal muscle, spleen, testis, gut and lung.

It localises to the secreted. Its function is as follows. Involved in both glial cell differentiation and axonal network formation during neurogenesis. Promotes astrocyte differentiation and transforms cerebellar astrocytes into radial glia. Also induces axonal extension in small and intermediate neurons of sensory ganglia by activating nearby satellite glia. This chain is Meteorin (Metrn), found in Mus musculus (Mouse).